Reading from the N-terminus, the 1623-residue chain is MGFEFIEWYCKPVPNGVWTKQVANAFGAYTPCATDSFVLGISQLVLLVLCLYRIWLALKDHKVERFCLRSRLYNYFLALLAAYATAEPLFRLIMGISVLDFDGPGLPPFEAFGLGVKAFAWGAVMVMILMETKIYIRELRWYVRFAVIYALVGDMVLLNLVLSVKEYYSSYVLYLYTSEVGAQVLFGILLFMHLPNLDTYPGYMPVRSETVDDYEYEEISDGQQICPEKHANIFDKIFFSWMNPLMTLGSKRPLTEKDVWYLDTWDQTETLFTSFQHSWDKELQKPQPWLLRALNNSLGGRFWWGGFWKIGNDCSQFVGPLLLNQLLKSMQEDAPAWMGYIYAFSIFVGVVFGVLCEAQYFQNVMRVGYRLRSALIAAVFRKSLRLTNEGRRKFQTGKITNLMTTDAESLQQICQSLHTMWSAPFRIIIALILLYQQLGVASLIGALLLVLMFPLQTVIISKMQKLTKEGLQRTDKRIGLMNEVLAAMDTVKCYAWENSFQSKVQTVRDDELSWFRKSQLLGALNMFILNSIPVLVTIVSFGVFTLLGGDLTPARAFTSLSLFAVLRFPLFMLPNIITQVVNANVSLKRLEEVLATEERILLPNPPIEPGEPAISIRNGYFSWDSKGDRPTLSNINLDVPLGSLVAVVGSTGEGKTSLISAILGELPATSDAIVTLRGSVAYVPQVSWIFNATVRDNILFGSPFDREKYERAIDVTSLKHDLELLPGGDLTEIGERGVNISGGQKQRVSMARAVYSNSDVYIFDDPLSALDAHVGQQVFEKCIKRELGQKTRVLVTNQLHFLSQVDRIVLVHEGTVKEEGTYEELSSNGPLFQRLMENAGKVEEYSEENGEAEADQTAEQPVANGNTNGLQMDGSDDKKSKEGNKKGGKSVLIKQEERETGVVSWRVLKRYQDALGGAWVVMMLLLCYVLTEVFRVTSSTWLSEWTDAGTPKSHGPLFYNLIYALLSFGQVLVTLTNSYWLIMSSLYAAKKLHDNMLHSILRAPMSFFHTNPLGRIINRFAKDLGDIDRTVAVFVNMFMGQVSQLLSTVVLIGIVSTLSLWAIMPLLVLFYGAYLYYQNTAREVKRMDSISRSPVYAQFGEALNGLSTIRAYKAYDRMADINGRSMDNNIRFTLVNMGANRWLGIRLETLGGLMIWLTASFAVMQNGRAENQQAFASTMGLLLSYALNITSLLTGVLRLASLAENSLNAVERVGNYIEIPPEAPPVIENNRPPPGWPSSGSIKFEDVVLRYRPQLPPVLHGVSFFIHPTDKVGIVGRTGAGKSSLLNALFRIVEVEKGRILIDDCDVGKFGLMDLRKVLGIIPQSPVLFSGTVRFNLDPFGEHNDADLWESLERAHLKDTIRRNPLGLDAEVSEAGENFSVGQRQLLSLSRALLRRSKILVLDEATAAVDVRTDALIQKTIREEFKSCTMLIIAHRLNTIIDCDKILVLDSGRVQEFSSPENLLSNEGSSFSKMVQSTGAANAEYLRSLVLDNKRAKDDSHHLQGQRKWLASSRWAAAAQFALAASLTSSHNDLQSLEIEDDSSILKRTNDAVVTLRSVLEGKHDKEIAESLEEHNISREGWLSSLYRMVEGLAVMSRLARNRMQQPDYNFEGNTFDWDNVEM.

The next 9 helical transmembrane spans lie at 37 to 57 (FVLG…IWLA), 76 to 96 (FLAL…IMGI), 109 to 129 (FEAF…VMIL), 145 to 165 (FAVI…LSVK), 172 to 192 (VLYL…LLFM), 336 to 356 (AWMG…GVLC), 440 to 460 (VASL…TVII), 527 to 547 (FILN…FTLL), and 557 to 577 (FTSL…PNII). The ABC transmembrane type-1 1 domain occupies 302-582 (FWWGGFWKIG…LPNIITQVVN (281 aa)). The 225-residue stretch at 614 to 838 (ISIRNGYFSW…GPLFQRLMEN (225 aa)) folds into the ABC transporter 1 domain. ATP is bound at residue 649–656 (GSTGEGKT). The tract at residues 842–890 (VEEYSEENGEAEADQTAEQPVANGNTNGLQMDGSDDKKSKEGNKKGGKS) is disordered. Positions 845 to 856 (YSEENGEAEADQ) are enriched in acidic residues. Over residues 857–870 (TAEQPVANGNTNGL) the composition is skewed to polar residues. The span at 875-885 (SDDKKSKEGNK) shows a compositional bias: basic and acidic residues. Helical transmembrane passes span 914-934 (ALGG…TEVF), 955-975 (GPLF…LVTL), 1032-1054 (AVFV…LIGI), 1058-1077 (LSLW…YLYY), 1143-1163 (LGIR…SFAV), and 1177-1197 (STMG…TGVL). Residues 921–1205 (VMMLLLCYVL…VLRLASLAEN (285 aa)) form the ABC transmembrane type-1 2 domain. The segment at 1236 to 1251 (WPSSGSIKFEDVVLRY) is interaction with calmodulin and FKP42/TWD1. The region spanning 1242–1476 (IKFEDVVLRY…EGSSFSKMVQ (235 aa)) is the ABC transporter 2 domain. Position 1276-1283 (1276-1283 (GRTGAGKS)) interacts with ATP.

Belongs to the ABC transporter superfamily. ABCC family. Conjugate transporter (TC 3.A.1.208) subfamily. Interacts with FKBP42/TWD1 and probably with calmodulin (CaM). As to expression, ubiquitous, at low levels.

It localises to the vacuole membrane. It carries out the reaction ATP + H2O + xenobioticSide 1 = ADP + phosphate + xenobioticSide 2.. Its activity is regulated as follows. Reciprocal promotion of DNP-GS and E(2)17betaG uptake. E(2)17betaG uptake is also stimulated by GSH and S-methyl-glutathione (S-methyl-GS), and, to a lower extent, by GSSG and C3G-GS. Metolachlor-GS and decyl-GS slightly inhibit E(2)17betaG uptake. Pump for glutathione S-conjugates. Mediates the transport of S-conjugates such as GSH, S-(2,4-dinitrophenyl)-glutathione (DNP-GS), GSSG, cyanidin 3-glucoside-GS (C3G-GS) and metolachlor-GS (MOC-GS), glucuronides such as 17-beta-estradiol 17-(beta-D-glucuronide) (E(2)17betaG), and of the chlorophyll catabolite such as B.napus nonfluorescent chlorophyll catabolite (Bn-NCC-1). The sequence is that of ABC transporter C family member 2 (ABCC2) from Arabidopsis thaliana (Mouse-ear cress).